Reading from the N-terminus, the 241-residue chain is Small ribosomal subunit protein uS2 (241 aa).

Belongs to the universal ribosomal protein uS2 family.

This is Small ribosomal subunit protein uS2 from Erwinia tasmaniensis (strain DSM 17950 / CFBP 7177 / CIP 109463 / NCPPB 4357 / Et1/99).